Here is a 278-residue protein sequence, read N- to C-terminus: Rhomboid protease GlpG (278 aa).

6 consecutive transmembrane segments (helical) span residues 95–115 (GPLTLSVMVLCIAIYILMQIV), 143–163 (AFLHFSLLHILFNLMWWWYLA), 170–190 (LGTGKLLVLTIVSALFSGWGQ), 192–212 (LFSGVNFGGLSGVVYALMGYV), 224–241 (ISLPRGLMAFSVLWLVAG), and 245–267 (ILGLSIANAAHVSGLIIGLLMAF). The Nucleophile role is filled by S202. The active site involves H255.

Belongs to the peptidase S54 family.

It is found in the cell inner membrane. It catalyses the reaction Cleaves type-1 transmembrane domains using a catalytic dyad composed of serine and histidine that are contributed by different transmembrane domains.. Its function is as follows. Rhomboid-type serine protease that catalyzes intramembrane proteolysis. In Yersinia enterocolitica serotype O:8 / biotype 1B (strain NCTC 13174 / 8081), this protein is Rhomboid protease GlpG.